A 245-amino-acid polypeptide reads, in one-letter code: tRNA (guanine-N(1)-)-methyltransferase (245 aa).

S-adenosyl-L-methionine is bound by residues G113 and 133-138 (IGDYVL).

Belongs to the RNA methyltransferase TrmD family. In terms of assembly, homodimer.

The protein localises to the cytoplasm. The catalysed reaction is guanosine(37) in tRNA + S-adenosyl-L-methionine = N(1)-methylguanosine(37) in tRNA + S-adenosyl-L-homocysteine + H(+). Specifically methylates guanosine-37 in various tRNAs. In Histophilus somni (strain 129Pt) (Haemophilus somnus), this protein is tRNA (guanine-N(1)-)-methyltransferase.